The primary structure comprises 438 residues: Gamma-glutamyl phosphate reductase (438 aa).

This sequence belongs to the gamma-glutamyl phosphate reductase family.

Its subcellular location is the cytoplasm. The enzyme catalyses L-glutamate 5-semialdehyde + phosphate + NADP(+) = L-glutamyl 5-phosphate + NADPH + H(+). The protein operates within amino-acid biosynthesis; L-proline biosynthesis; L-glutamate 5-semialdehyde from L-glutamate: step 2/2. Catalyzes the NADPH-dependent reduction of L-glutamate 5-phosphate into L-glutamate 5-semialdehyde and phosphate. The product spontaneously undergoes cyclization to form 1-pyrroline-5-carboxylate. This Prochlorococcus marinus (strain MIT 9303) protein is Gamma-glutamyl phosphate reductase.